We begin with the raw amino-acid sequence, 358 residues long: Pseudouridylate synthase RPUSD4, mitochondrial (358 aa).

Residues 1–12 constitute a mitochondrion transit peptide; the sequence is MRHAREVTFARL.

Belongs to the pseudouridine synthase RluA family.

Its subcellular location is the mitochondrion matrix. It is found in the nucleus. The protein resides in the cytoplasm. The enzyme catalyses uridine in 5S rRNA = pseudouridine in 5S rRNA. The catalysed reaction is a uridine in tRNA = a pseudouridine in tRNA. It catalyses the reaction a uridine in mRNA = a pseudouridine in mRNA. Its function is as follows. Catalyzes uridine to pseudouridine isomerization (pseudouridylation) of different mitochondrial RNA substrates. Acts on position 1397 in 16S mitochondrial ribosomal RNA (16S mt-rRNA). This modification is required for the assembly of 16S mt-rRNA into a functional mitochondrial ribosome. Acts on position 39 in mitochondrial tRNA(Phe). Also catalyzes pseudouridylation of mRNAs in nucleus: acts as a regulator of pre-mRNA splicing by mediating pseudouridylation of pre-mRNAs at locations associated with alternatively spliced regions. Pseudouridylation of pre-mRNAs near splice sites directly regulates mRNA splicing and mRNA 3'-end processing. The polypeptide is Pseudouridylate synthase RPUSD4, mitochondrial (Danio rerio (Zebrafish)).